We begin with the raw amino-acid sequence, 83 residues long: Transmembrane protein EP84R (83 aa).

2 helical membrane-spanning segments follow: residues 31-51 (VIGIILLVISLLLIFIGIIIL) and 59-79 (AGSVLVVLSLILGGGGFFLIY).

It belongs to the asfivirus EP84R family.

It localises to the virion membrane. This Ornithodoros (relapsing fever ticks) protein is Transmembrane protein EP84R.